Reading from the N-terminus, the 245-residue chain is 1-acyl-sn-glycerol-3-phosphate acyltransferase (245 aa).

N-formylmethionine is present on methionine 1. Residues 73–78 (HQNNYD) carry the HXXXXD motif motif.

The protein belongs to the 1-acyl-sn-glycerol-3-phosphate acyltransferase family.

Its subcellular location is the cell inner membrane. The catalysed reaction is a 1-acyl-sn-glycero-3-phosphate + an acyl-CoA = a 1,2-diacyl-sn-glycero-3-phosphate + CoA. It carries out the reaction a fatty acyl-[ACP] + a 1-acyl-sn-glycero-3-phosphate = a 1,2-diacyl-sn-glycero-3-phosphate + holo-[ACP]. It functions in the pathway phospholipid metabolism; CDP-diacylglycerol biosynthesis; CDP-diacylglycerol from sn-glycerol 3-phosphate: step 2/3. Converts lysophosphatidic acid (LPA) into phosphatidic acid by incorporating an acyl moiety at the 2 position. This enzyme can utilize either acyl-CoA or acyl-ACP as the fatty acyl donor. In Escherichia coli (strain K12), this protein is 1-acyl-sn-glycerol-3-phosphate acyltransferase (plsC).